A 208-amino-acid chain; its full sequence is Bacitracin transport permease protein BCRB (208 aa).

A run of 6 helical transmembrane segments spans residues 23 to 43 (LYIV…YLFN), 70 to 90 (VLLL…TLLF), 111 to 131 (FMIG…VTLL), 135 to 155 (YVPT…VYGT), 159 to 179 (ALFP…PEYP), and 182 to 202 (YSFI…IVYF).

Its subcellular location is the cell membrane. Its function is as follows. Part of the binding-protein-dependent transport system for bacitracin that confer resistance to this antibiotic; probably responsible for the translocation of the substrate across the membrane. The polypeptide is Bacitracin transport permease protein BCRB (bcrB) (Bacillus licheniformis).